We begin with the raw amino-acid sequence, 166 residues long: Protein UL5 (166 aa).

Interacts with host IQGAP1.

It localises to the host cytoplasm. May play a role in rearrangement of cellular cytoskeleton towards an efficient viral assembly and spreading. The protein is Protein UL5 (UL5) of Human cytomegalovirus (strain Merlin) (HHV-5).